A 475-amino-acid polypeptide reads, in one-letter code: tRNA-dihydrouridine(16/17) synthase [NAD(P)(+)]-like (475 aa).

Residues 23-25 (PMV) and glutamine 79 each bind FMN. The active-site Proton donor is cysteine 108. Residues lysine 147, histidine 175, 208–210 (NGN), and 232–233 (AE) each bind FMN. The interval 343 to 388 (GPREGSKENSGGRSKRALEEEEGSMEGLSKNKLKKQLRNPHKTFDP) is disordered. Residues 373–383 (NKLKKQLRNPH) show a composition bias toward basic residues.

It belongs to the Dus family. Dus1 subfamily. FMN is required as a cofactor.

It is found in the cytoplasm. Its subcellular location is the nucleus. The enzyme catalyses 5,6-dihydrouridine(16) in tRNA + NADP(+) = uridine(16) in tRNA + NADPH + H(+). It catalyses the reaction 5,6-dihydrouridine(16) in tRNA + NAD(+) = uridine(16) in tRNA + NADH + H(+). It carries out the reaction 5,6-dihydrouridine(17) in tRNA + NAD(+) = uridine(17) in tRNA + NADH + H(+). The catalysed reaction is 5,6-dihydrouridine(17) in tRNA + NADP(+) = uridine(17) in tRNA + NADPH + H(+). Catalyzes the synthesis of dihydrouridine, a modified base found in the D-loop of most tRNAs. Specifically modifies U16 and U17 in cytoplasmic tRNAs. Affects the level of some mature tRNA and thereby the total cellular translation. The sequence is that of tRNA-dihydrouridine(16/17) synthase [NAD(P)(+)]-like (Dus1l) from Mus musculus (Mouse).